We begin with the raw amino-acid sequence, 241 residues long: DNA repair protein RecO (241 aa).

It belongs to the RecO family.

Functionally, involved in DNA repair and RecF pathway recombination. The chain is DNA repair protein RecO from Roseobacter denitrificans (strain ATCC 33942 / OCh 114) (Erythrobacter sp. (strain OCh 114)).